A 215-amino-acid polypeptide reads, in one-letter code: Pyridoxine/pyridoxamine 5'-phosphate oxidase (215 aa).

Substrate-binding positions include 9–12 and Lys69; that span reads RREY. FMN-binding positions include 64–69, 79–80, Lys86, and Gln108; these read RILLLK and FT. Positions 126, 130, and 134 each coordinate substrate. FMN-binding positions include 143–144 and Trp188; that span reads QS. 194–196 contacts substrate; sequence RLH. An FMN-binding site is contributed by Arg198.

Belongs to the pyridoxamine 5'-phosphate oxidase family. In terms of assembly, homodimer. The cofactor is FMN.

It carries out the reaction pyridoxamine 5'-phosphate + O2 + H2O = pyridoxal 5'-phosphate + H2O2 + NH4(+). The enzyme catalyses pyridoxine 5'-phosphate + O2 = pyridoxal 5'-phosphate + H2O2. Its pathway is cofactor metabolism; pyridoxal 5'-phosphate salvage; pyridoxal 5'-phosphate from pyridoxamine 5'-phosphate: step 1/1. The protein operates within cofactor metabolism; pyridoxal 5'-phosphate salvage; pyridoxal 5'-phosphate from pyridoxine 5'-phosphate: step 1/1. Catalyzes the oxidation of either pyridoxine 5'-phosphate (PNP) or pyridoxamine 5'-phosphate (PMP) into pyridoxal 5'-phosphate (PLP). This Pseudomonas paraeruginosa (strain DSM 24068 / PA7) (Pseudomonas aeruginosa (strain PA7)) protein is Pyridoxine/pyridoxamine 5'-phosphate oxidase.